A 623-amino-acid chain; its full sequence is Chaperone protein DnaK (623 aa).

At Thr174 the chain carries Phosphothreonine; by autocatalysis. Disordered stretches follow at residues 470–504 (ITIKSSSGLSDEEIKKMQKDAEEHAEEDKKRKEEV) and 578–623 (GGAQ…DPDK). A compositionally biased stretch (basic and acidic residues) spans 481-504 (EEIKKMQKDAEEHAEEDKKRKEEV). Low complexity predominate over residues 578–604 (GGAQGAAGQAGPQGAQGGQPNNDNGSS). The span at 614–623 (GDFHKVDPDK) shows a compositional bias: basic and acidic residues.

This sequence belongs to the heat shock protein 70 family.

In terms of biological role, acts as a chaperone. The protein is Chaperone protein DnaK of Lactobacillus gasseri (strain ATCC 33323 / DSM 20243 / BCRC 14619 / CIP 102991 / JCM 1131 / KCTC 3163 / NCIMB 11718 / NCTC 13722 / AM63).